Reading from the N-terminus, the 150-residue chain is Large ribosomal subunit protein uL11 (150 aa).

It belongs to the universal ribosomal protein uL11 family. In terms of assembly, part of the ribosomal stalk of the 50S ribosomal subunit. Interacts with L10 and the large rRNA to form the base of the stalk. L10 forms an elongated spine to which L12 dimers bind in a sequential fashion forming a multimeric L10(L12)X complex. In terms of processing, one or more lysine residues are methylated.

Its function is as follows. Forms part of the ribosomal stalk which helps the ribosome interact with GTP-bound translation factors. In Jannaschia sp. (strain CCS1), this protein is Large ribosomal subunit protein uL11.